The following is a 767-amino-acid chain: Start control protein cdc10 (767 aa).

Residues 17 to 44 are disordered; sequence FSYQKRPEDEPSQPLSNRNINKLNDSST. Residues 29-44 show a composition bias toward polar residues; it reads QPLSNRNINKLNDSST. Residues 66–173 form the HTH APSES-type domain; it reads ELYAVECSGM…FNLDLFPKFS (108 aa). Residues 98 to 119 constitute a DNA-binding region (H-T-H motif); sequence ISQILRLAGTSSSENAKELDDI. The disordered stretch occupies residues 189–230; the sequence is TSSFNTRSPLRNHNFSNPSKSSKNGVHTINNMQSSPSPSSSF. Over residues 192-221 the composition is skewed to polar residues; it reads FNTRSPLRNHNFSNPSKSSKNGVHTINNMQ. Ser-252 carries the post-translational modification Phosphoserine. A Nuclear localization signal motif is present at residues 261–264; sequence KRHR. 2 ANK repeats span residues 356 to 385 and 483 to 512; these read LGHA…NPLR and NGDT…SAYI. The disordered stretch occupies residues 542–562; that stretch reads VSLMSENLSSKEKTAVPPRQK.

In terms of assembly, DSC1 contains cdc10 and sct1/res1. Interacts with pol5.

The protein localises to the nucleus. In terms of biological role, major component of the cell cycle transcription factor complex MBF (MCB binding factor, also known as DSC1), that controls G1-S phase specific gene expression. Involved in the control of rRNA production, via interaction with pol5. May be involved in the transcriptional regulation of the cdc22 and cdt1 genes. In fission yeast, two genes, cdc10 and cdc2, are required for the cell cycle control called start, the point early in the G1 phase at which cells become committed to the mitotic cycle. The chain is Start control protein cdc10 (cdc10) from Schizosaccharomyces pombe (strain 972 / ATCC 24843) (Fission yeast).